The sequence spans 183 residues: Bifunctional protein PyrR (183 aa).

Substrate is bound by residues 46–47 (TR), arginine 87, 107–115 (DDVIFSGRT), arginine 140, and valine 164. Residues 103-115 (VVLVDDVIFSGRT) carry the PRPP-binding motif.

This sequence belongs to the purine/pyrimidine phosphoribosyltransferase family. PyrR subfamily.

The catalysed reaction is UMP + diphosphate = 5-phospho-alpha-D-ribose 1-diphosphate + uracil. In terms of biological role, regulates the transcription of the pyrimidine nucleotide (pyr) operon in response to exogenous pyrimidines. Functionally, also displays a weak uracil phosphoribosyltransferase activity which is not physiologically significant. The sequence is that of Bifunctional protein PyrR from Thermosynechococcus vestitus (strain NIES-2133 / IAM M-273 / BP-1).